A 493-amino-acid chain; its full sequence is Cytochrome P450 2E1 (493 aa).

298 to 303 (FAGTET) is a binding site for substrate. Heme is bound at residue cysteine 437.

Belongs to the cytochrome P450 family. Interacts with chaperones HSP70 and HSP90; this interaction is required for initial targeting to mitochondria. It depends on heme as a cofactor.

The protein localises to the endoplasmic reticulum membrane. It localises to the microsome membrane. Its subcellular location is the mitochondrion inner membrane. The catalysed reaction is an organic molecule + reduced [NADPH--hemoprotein reductase] + O2 = an alcohol + oxidized [NADPH--hemoprotein reductase] + H2O + H(+). It carries out the reaction (5Z,8Z,11Z)-eicosatrienoate + reduced [NADPH--hemoprotein reductase] + O2 = 19-hydroxy-(5Z,8Z,11Z)-eicosatrienoate + oxidized [NADPH--hemoprotein reductase] + H2O + H(+). It catalyses the reaction (5Z,8Z,11Z,14Z,17Z)-eicosapentaenoate + reduced [NADPH--hemoprotein reductase] + O2 = 19-hydroxy-(5Z,8Z,11Z,14Z,17Z)-eicosapentaenoate + oxidized [NADPH--hemoprotein reductase] + H2O + H(+). The enzyme catalyses (4Z,7Z,10Z,13Z,16Z,19Z)-docosahexaenoate + reduced [NADPH--hemoprotein reductase] + O2 = 21-hydroxy-(4Z,7Z,10Z,13Z,16Z,19Z)-docosahexaenoate + oxidized [NADPH--hemoprotein reductase] + H2O + H(+). The catalysed reaction is dodecanoate + reduced [NADPH--hemoprotein reductase] + O2 = 11-hydroxydodecanoate + oxidized [NADPH--hemoprotein reductase] + H2O + H(+). It carries out the reaction tetradecanoate + reduced [NADPH--hemoprotein reductase] + O2 = 13-hydroxytetradecanoate + oxidized [NADPH--hemoprotein reductase] + H2O + H(+). It catalyses the reaction 4-nitrophenol + NADPH + O2 + H(+) = 4-nitrocatechol + NADP(+) + H2O. The protein operates within lipid metabolism; fatty acid metabolism. Its activity is regulated as follows. The omega-1 hydroxylase activity is stimulated by cytochrome b5. Its function is as follows. A cytochrome P450 monooxygenase involved in the metabolism of fatty acids. Mechanistically, uses molecular oxygen inserting one oxygen atom into a substrate, and reducing the second into a water molecule, with two electrons provided by NADPH via cytochrome P450 reductase (NADPH--hemoprotein reductase). Catalyzes the hydroxylation of carbon-hydrogen bonds. Hydroxylates fatty acids specifically at the omega-1 position displaying the highest catalytic activity for saturated fatty acids. May be involved in the oxidative metabolism of xenobiotics. The polypeptide is Cytochrome P450 2E1 (CYP2E1) (Oryctolagus cuniculus (Rabbit)).